A 612-amino-acid chain; its full sequence is MSRIGKHPAIALLDSGITFKEVRQIHAKLYVDGTLKDDHLVGHFVKAVALSDHKYLDYANQILDRSEKPTLFALNSMIRAHCKSPVPEKSFDFYRRILSSGNDLKPDNYTVNFLVQACTGLRMRETGLQVHGMTIRRGFDNDPHVQTGLISLYAELGCLDSCHKVFNSIPCPDFVCRTAMVTACARCGDVVFARKLFEGMPERDPIAWNAMISGYAQVGESREALNVFHLMQLEGVKVNGVAMISVLSACTQLGALDQGRWAHSYIERNKIKITVRLATTLVDLYAKCGDMEKAMEVFWGMEEKNVYTWSSALNGLAMNGFGEKCLELFSLMKQDGVTPNAVTFVSVLRGCSVVGFVDEGQRHFDSMRNEFGIEPQLEHYGCLVDLYARAGRLEDAVSIIQQMPMKPHAAVWSSLLHASRMYKNLELGVLASKKMLELETANHGAYVLLSNIYADSNDWDNVSHVRQSMKSKGVRKQPGCSVMEVNGEVHEFFVGDKSHPKYTQIDAVWKDISRRLRLAGYKADTTPVMFDIDEEEKEDALCLHSEKAAIAFGIMSLKEDVPIRIVKNLRVCGDCHQVSMMISKIFNREIIVRDRNRFHHFKDGHCSCNGFW.

PPR repeat units follow at residues 70 to 104 (TLFALNSMIRAHCKSPVPEKSFDFYRRILSSGNDL), 107 to 141 (DNYTVNFLVQACTGLRMRETGLQVHGMTIRRGFDN), 142 to 172 (DPHVQTGLISLYAELGCLDSCHKVFNSIPCP), 173 to 203 (DFVCRTAMVTACARCGDVVFARKLFEGMPER), 204 to 238 (DPIAWNAMISGYAQVGESREALNVFHLMQLEGVKV), 239 to 273 (NGVAMISVLSACTQLGALDQGRWAHSYIERNKIKI), 274 to 304 (TVRLATTLVDLYAKCGDMEKAMEVFWGMEEK), 305 to 339 (NVYTWSSALNGLAMNGFGEKCLELFSLMKQDGVTP), 340 to 375 (NAVTFVSVLRGCSVVGFVDEGQRHFDSMRNEFGIEP), and 376 to 410 (QLEHYGCLVDLYARAGRLEDAVSIIQQMPMKPHAA). Residues 411–486 (VWSSLLHASR…QPGCSVMEVN (76 aa)) are type E motif. A type E(+) motif region spans residues 487-517 (GEVHEFFVGDKSHPKYTQIDAVWKDISRRLR). The segment at 518–612 (LAGYKADTTP…DGHCSCNGFW (95 aa)) is type DYW motif.

It belongs to the PPR family. PCMP-H subfamily.

This is Putative pentatricopeptide repeat-containing protein At5g40405 (PCMP-H14) from Arabidopsis thaliana (Mouse-ear cress).